Here is a 104-residue protein sequence, read N- to C-terminus: N(4)-acetylcytidine amidohydrolase (104 aa).

The region spanning 7 to 104 (TFFTRFEQDI…FWVIAFELVD (98 aa)) is the ASCH domain. The active-site Proton acceptor is the Lys21. The Nucleophile role is filled by Thr24. Residue Glu74 is the Proton donor of the active site.

Belongs to the N(4)-acetylcytidine amidohydrolase family.

It catalyses the reaction N(4)-acetylcytidine + H2O = cytidine + acetate + H(+). The enzyme catalyses N(4)-acetyl-2'-deoxycytidine + H2O = 2'-deoxycytidine + acetate + H(+). The catalysed reaction is N(4)-acetylcytosine + H2O = cytosine + acetate + H(+). Functionally, catalyzes the hydrolysis of N(4)-acetylcytidine (ac4C). The protein is N(4)-acetylcytidine amidohydrolase of Pasteurella multocida (strain Pm70).